We begin with the raw amino-acid sequence, 354 residues long: Chaperone protein dnaJ 49 (354 aa).

The J domain occupies 99-163 (DYYAILGLEK…NSRRQFDQVG (65 aa)). Residues 237-257 (CLTIIQILPFFLLLLLAYLPF) traverse the membrane as a helical segment.

It belongs to the DnaJ family. C/III subfamily.

The protein localises to the membrane. In terms of biological role, plays a continuous role in plant development probably in the structural organization of compartments. In Arabidopsis thaliana (Mouse-ear cress), this protein is Chaperone protein dnaJ 49 (ATJ49).